A 65-amino-acid chain; its full sequence is Small ribosomal subunit protein bS21 (65 aa).

The disordered stretch occupies residues 45 to 65 (GRLKRSRSRRRAQRANEERNS). A compositionally biased stretch (basic residues) spans 48-57 (KRSRSRRRAQ).

Belongs to the bacterial ribosomal protein bS21 family.

The chain is Small ribosomal subunit protein bS21 from Chlorobium phaeobacteroides (strain DSM 266 / SMG 266 / 2430).